A 245-amino-acid polypeptide reads, in one-letter code: 1-(5-phosphoribosyl)-5-[(5-phosphoribosylamino)methylideneamino] imidazole-4-carboxamide isomerase (245 aa).

The Proton acceptor role is filled by D8. The Proton donor role is filled by D129.

The protein belongs to the HisA/HisF family.

It is found in the cytoplasm. The catalysed reaction is 1-(5-phospho-beta-D-ribosyl)-5-[(5-phospho-beta-D-ribosylamino)methylideneamino]imidazole-4-carboxamide = 5-[(5-phospho-1-deoxy-D-ribulos-1-ylimino)methylamino]-1-(5-phospho-beta-D-ribosyl)imidazole-4-carboxamide. Its pathway is amino-acid biosynthesis; L-histidine biosynthesis; L-histidine from 5-phospho-alpha-D-ribose 1-diphosphate: step 4/9. This Sinorhizobium fredii (strain NBRC 101917 / NGR234) protein is 1-(5-phosphoribosyl)-5-[(5-phosphoribosylamino)methylideneamino] imidazole-4-carboxamide isomerase.